A 166-amino-acid chain; its full sequence is Cyclic pyranopterin monophosphate synthase (166 aa).

Substrate-binding positions include Met75–His77 and Met115–Glu116. The active site involves Asp130.

The protein belongs to the MoaC family. As to quaternary structure, homohexamer; trimer of dimers.

The enzyme catalyses (8S)-3',8-cyclo-7,8-dihydroguanosine 5'-triphosphate = cyclic pyranopterin phosphate + diphosphate. The protein operates within cofactor biosynthesis; molybdopterin biosynthesis. Catalyzes the conversion of (8S)-3',8-cyclo-7,8-dihydroguanosine 5'-triphosphate to cyclic pyranopterin monophosphate (cPMP). In Shouchella clausii (strain KSM-K16) (Alkalihalobacillus clausii), this protein is Cyclic pyranopterin monophosphate synthase.